A 174-amino-acid chain; its full sequence is Adenylate kinase (174 aa).

The segment at 12-41 is NMP; sequence STGDMLRAAIKAGTPLGLEAKKIIDEGGLV. AMP is bound by residues T13, R18, 39–41, 67–70, and Q74; these read GLV and GFPR. The LID stretch occupies residues 104 to 141; it reads GRRVHLASGRTYHVTYNPPKVEGKDDVTGEDLIQRDDD. ATP is bound by residues R105 and 114-115; that span reads TY. AMP contacts are provided by R138 and R149.

The protein belongs to the adenylate kinase family. Monomer.

It localises to the cytoplasm. The enzyme catalyses AMP + ATP = 2 ADP. It functions in the pathway purine metabolism; AMP biosynthesis via salvage pathway; AMP from ADP: step 1/1. Functionally, catalyzes the reversible transfer of the terminal phosphate group between ATP and AMP. Plays an important role in cellular energy homeostasis and in adenine nucleotide metabolism. The protein is Adenylate kinase of Neisseria flavescens.